The sequence spans 53 residues: UPF0391 membrane protein azo1750 (53 aa).

The next 2 membrane-spanning stretches (helical) occupy residues 6 to 26 (VIFLIIAIIAAVFGFGGIAAG) and 30 to 50 (IAKILFYLFLVIFLVSLVLGM).

It belongs to the UPF0391 family.

Its subcellular location is the cell membrane. The chain is UPF0391 membrane protein azo1750 from Azoarcus sp. (strain BH72).